Here is a 109-residue protein sequence, read N- to C-terminus: Iron-sulfur cluster assembly protein CyaY (109 aa).

This sequence belongs to the frataxin family.

In terms of biological role, involved in iron-sulfur (Fe-S) cluster assembly. May act as a regulator of Fe-S biogenesis. This Verminephrobacter eiseniae (strain EF01-2) protein is Iron-sulfur cluster assembly protein CyaY.